A 66-amino-acid chain; its full sequence is Vesicular acetylcholine transporter (66 aa).

A helical transmembrane segment spans residues 1-15; sequence GMGLANLLYAPVLLL. Residues 16-66 lie on the Cytoplasmic side of the membrane; sequence LRNVGLLTRSRSERDVLLDEPPQGLYDAVRLRERPVSGQDGEPRSPPGPFD. The interval 43–66 is disordered; it reads AVRLRERPVSGQDGEPRSPPGPFD.

This sequence belongs to the major facilitator superfamily. Vesicular transporter family. In terms of assembly, interacts with SEC14L1.

It localises to the cytoplasmic vesicle. It is found in the secretory vesicle. The protein resides in the synaptic vesicle membrane. The enzyme catalyses acetylcholine(out) + 2 H(+)(in) = acetylcholine(in) + 2 H(+)(out). It carries out the reaction choline(in) + 2 H(+)(out) = choline(out) + 2 H(+)(in). The catalysed reaction is serotonin(in) + 2 H(+)(out) = serotonin(out) + 2 H(+)(in). Electrogenic antiporter that exchanges one cholinergic neurotransmitter, acetylcholine or choline, with two intravesicular protons across the membrane of synaptic vesicles. Uses the electrochemical proton gradient established by the V-type proton-pump ATPase to store neurotransmitters inside the vesicles prior to their release via exocytosis. Determines cholinergic vesicular quantal size at presynaptic nerve terminals in developing neuro-muscular junctions with an impact on motor neuron differentiation and innervation pattern. Part of forebrain cholinergic system, regulates hippocampal synapse transmissions that underlie spatial memory formation. Can transport serotonin. The protein is Vesicular acetylcholine transporter (SLC18A3) of Macaca fuscata fuscata (Japanese macaque).